Here is a 245-residue protein sequence, read N- to C-terminus: tRNA1(Val) (adenine(37)-N6)-methyltransferase (245 aa).

The protein belongs to the methyltransferase superfamily. tRNA (adenine-N(6)-)-methyltransferase family.

Its subcellular location is the cytoplasm. The enzyme catalyses adenosine(37) in tRNA1(Val) + S-adenosyl-L-methionine = N(6)-methyladenosine(37) in tRNA1(Val) + S-adenosyl-L-homocysteine + H(+). Its function is as follows. Specifically methylates the adenine in position 37 of tRNA(1)(Val) (anticodon cmo5UAC). The sequence is that of tRNA1(Val) (adenine(37)-N6)-methyltransferase from Cronobacter sakazakii (strain ATCC BAA-894) (Enterobacter sakazakii).